The following is a 371-amino-acid chain: MHRQSFFLVPLICLSSALWAAPATVNVEVLQDKLDHPWALAFLPDNHGMLITLRGGELRHWQAGKGLSAPLSGVPDVWAHGQGGLLDVVLAPDFAQSRRIWLSYSEVGDDGKAGTAVGYGRLSDDLSKVTDFRTVFRQMPKLSTGNHFGGRLVFDGKGYLFIALGENNQRPTAQDLDKLQGKLVRLTDQGEIPDDNPFIKESGARAEIWSYGIRNPQGMAMNPWSNALWLNEHGPRGGDEINIPQKGKNYGWPLATWGINYSGFKIPEAKGEIVAGTEQPVFYWKDSPAVSGMAFYNSDKFPQWQQKLFIGALKDKDVIVMSVNGDKVTEDGRILTDRGQRIRDVRTGPDGYLYVLTDESSGELLKVSPRN.

The N-terminal stretch at methionine 1–alanine 20 is a signal peptide. Glutamine 82 contributes to the pyrroloquinoline quinone binding site. Histidine 147 functions as the Proton acceptor in the catalytic mechanism. A PQQ region spans residues arginine 214 to asparagine 215. Glutamate 240 and tyrosine 250 together coordinate Ca(2+). Pyrroloquinoline quinone is bound at residue tyrosine 261. PQQ regions lie at residues alanine 312 to lysine 314 and arginine 341 to arginine 343.

Belongs to the PQQ oxidoreductase GdhB family. Monomer. It depends on Ca(2+) as a cofactor. Pyrroloquinoline quinone is required as a cofactor.

The protein resides in the cell outer membrane. Functionally, aldose sugar dehydrogenase with broad substrate specificity. The physiological substrate is unknown. Can oxidize glucose to gluconolactone. Can also utilize D-arabinose, L-arabinose and 2-deoxy-glucose. Has higher activity towards oligomeric sugars, such as maltose, maltotriose or cellobiose. It may function to input sugar-derived electrons into the respiratory network. In Escherichia coli (strain K12), this protein is Aldose sugar dehydrogenase YliI (yliI).